A 407-amino-acid polypeptide reads, in one-letter code: Arginine deiminase (407 aa).

Cysteine 397 functions as the Amidino-cysteine intermediate in the catalytic mechanism.

This sequence belongs to the arginine deiminase family.

It is found in the cytoplasm. The enzyme catalyses L-arginine + H2O = L-citrulline + NH4(+). Its pathway is amino-acid degradation; L-arginine degradation via ADI pathway; carbamoyl phosphate from L-arginine: step 1/2. In Limosilactobacillus fermentum (strain NBRC 3956 / LMG 18251) (Lactobacillus fermentum), this protein is Arginine deiminase.